The following is a 103-amino-acid chain: Small ribosomal subunit protein uS10 (103 aa).

This sequence belongs to the universal ribosomal protein uS10 family. Part of the 30S ribosomal subunit.

Involved in the binding of tRNA to the ribosomes. The chain is Small ribosomal subunit protein uS10 from Picrophilus torridus (strain ATCC 700027 / DSM 9790 / JCM 10055 / NBRC 100828 / KAW 2/3).